Here is a 363-residue protein sequence, read N- to C-terminus: 3-dehydroquinate synthase (363 aa).

NAD(+)-binding positions include 72-77 (SGEKEK), 130-131 (TT), Lys142, and Lys151. Residues Glu184, His247, and His264 each contribute to the Zn(2+) site.

This sequence belongs to the sugar phosphate cyclases superfamily. Dehydroquinate synthase family. Co(2+) is required as a cofactor. The cofactor is Zn(2+). Requires NAD(+) as cofactor.

The protein resides in the cytoplasm. It catalyses the reaction 7-phospho-2-dehydro-3-deoxy-D-arabino-heptonate = 3-dehydroquinate + phosphate. It functions in the pathway metabolic intermediate biosynthesis; chorismate biosynthesis; chorismate from D-erythrose 4-phosphate and phosphoenolpyruvate: step 2/7. Catalyzes the conversion of 3-deoxy-D-arabino-heptulosonate 7-phosphate (DAHP) to dehydroquinate (DHQ). This chain is 3-dehydroquinate synthase, found in Bacillus thuringiensis (strain Al Hakam).